We begin with the raw amino-acid sequence, 230 residues long: Cytidylate kinase (230 aa).

12-20 (GPSGAGKGT) lines the ATP pocket.

The protein belongs to the cytidylate kinase family. Type 1 subfamily.

The protein resides in the cytoplasm. The catalysed reaction is CMP + ATP = CDP + ADP. It catalyses the reaction dCMP + ATP = dCDP + ADP. This is Cytidylate kinase from Shewanella sp. (strain MR-7).